The chain runs to 655 residues: p-hydroxybenzoic acid efflux pump subunit AaeB (655 aa).

The next 11 helical transmembrane spans lie at 13 to 33 (FAVK…HFQL), 38 to 58 (WAVL…GGEP), 69 to 89 (LRII…IAMI), 93 to 113 (LLMI…SSLV), 121 to 141 (WGLA…EPLL), 152 to 172 (EIVI…PRSI), 370 to 390 (LFWL…IAVV), 407 to 427 (FIYG…VIIP), 431 to 451 (QSML…GIEV), 459 to 479 (MGAL…TFHF), and 482 to 502 (FLDS…VILL).

This sequence belongs to the aromatic acid exporter ArAE (TC 2.A.85) family.

It is found in the cell inner membrane. Forms an efflux pump with AaeA. Could function as a metabolic relief valve, allowing to eliminate certain compounds when they accumulate to high levels in the cell. The sequence is that of p-hydroxybenzoic acid efflux pump subunit AaeB from Escherichia coli O6:K15:H31 (strain 536 / UPEC).